We begin with the raw amino-acid sequence, 233 residues long: Leucyl/phenylalanyl-tRNA--protein transferase (233 aa).

This sequence belongs to the L/F-transferase family.

The protein localises to the cytoplasm. It carries out the reaction N-terminal L-lysyl-[protein] + L-leucyl-tRNA(Leu) = N-terminal L-leucyl-L-lysyl-[protein] + tRNA(Leu) + H(+). The catalysed reaction is N-terminal L-arginyl-[protein] + L-leucyl-tRNA(Leu) = N-terminal L-leucyl-L-arginyl-[protein] + tRNA(Leu) + H(+). The enzyme catalyses L-phenylalanyl-tRNA(Phe) + an N-terminal L-alpha-aminoacyl-[protein] = an N-terminal L-phenylalanyl-L-alpha-aminoacyl-[protein] + tRNA(Phe). In terms of biological role, functions in the N-end rule pathway of protein degradation where it conjugates Leu, Phe and, less efficiently, Met from aminoacyl-tRNAs to the N-termini of proteins containing an N-terminal arginine or lysine. The polypeptide is Leucyl/phenylalanyl-tRNA--protein transferase (Anaeromyxobacter dehalogenans (strain 2CP-C)).